The primary structure comprises 267 residues: Thiamine thiazole synthase (267 aa).

NAD(+) is bound by residues serine 41, 60 to 61, glycine 68, valine 132, and 160 to 162; these read ER and HVD. Positions 162 and 177 each coordinate Fe cation. Residue methionine 227 coordinates NAD(+). Residue arginine 237 coordinates glycine.

The protein belongs to the THI4 family. As to quaternary structure, homooctamer; tetramer of dimers. Requires Fe(2+) as cofactor.

It catalyses the reaction hydrogen sulfide + glycine + NAD(+) = ADP-5-ethyl-4-methylthiazole-2-carboxylate + nicotinamide + 3 H2O + H(+). Its pathway is cofactor biosynthesis; thiamine diphosphate biosynthesis. Its function is as follows. Involved in the biosynthesis of the thiazole moiety of thiamine. Catalyzes the conversion of NAD and glycine to adenosine diphosphate 5-(2-hydroxyethyl)-4-methylthiazole-2-carboxylate (ADT), an adenylated thiazole intermediate, using free sulfide as a source of sulfur. In Saccharolobus islandicus (strain Y.N.15.51 / Yellowstone #2) (Sulfolobus islandicus), this protein is Thiamine thiazole synthase.